We begin with the raw amino-acid sequence, 474 residues long: Iroquois-class homeodomain protein irx-5 (474 aa).

A DNA-binding region (homeobox; TALE-type) is located at residues 109–171 (DPAYRKNASR…NARRRLKKEN (63 aa)). Disordered regions lie at residues 174 to 222 (TWTP…SPDG), 252 to 294 (ERNG…IQQL), and 453 to 474 (SQSQ…MSSI). Acidic residues predominate over residues 182–199 (EDEDDDENIDLEKNEEDD). Residues 263 to 273 (PPTPPLCPPDQ) are compositionally biased toward pro residues.

The protein belongs to the TALE/IRO homeobox family. As to expression, early in gastrulation, expressed in cells beneath the blastopore lip. Subsequently expressed in the neural plate in overlapping patterns with other irx members, which all share an anterior border of expression. At the time of neural tube closure (stage 19) in regions of the midbrain, hindbrain, neural tube and optic vesicle, where expression continues during tailbud stages. In stage 34, expressed throughout the eye retina. Does not appear to be expressed in the developing heart or pronephros.

Its subcellular location is the nucleus. Functionally, acts partially redundantly with other irx members in neural patterning. Required for formation of the posterior forebrain, midbrain, hindbrain, and to a lesser extent, spinal cord. Patterns the neuroectoderm in both the anterior/posterior and dorsal/ventral axes. Does not appear to play a role in pronephros kidney development. Involved in craniofacial and gonadal development. Modulates the migration of progenitor cell populations in branchial arches and gonads by repressing CXCL12. The sequence is that of Iroquois-class homeodomain protein irx-5 (irx5) from Xenopus laevis (African clawed frog).